The sequence spans 332 residues: Leucine carboxyl methyltransferase 1 homolog (332 aa).

S-adenosyl-L-methionine contacts are provided by residues Lys-22, Arg-57, Gly-83, Asp-107, 153–154 (DL), and Glu-180.

The protein belongs to the methyltransferase superfamily. LCMT family.

Its subcellular location is the cytoplasm. It is found in the membrane. The catalysed reaction is [phosphatase 2A protein]-C-terminal L-leucine + S-adenosyl-L-methionine = [phosphatase 2A protein]-C-terminal L-leucine methyl ester + S-adenosyl-L-homocysteine. Functionally, methylates the carboxyl group of the C-terminal leucine residue of protein phosphatase 2A (PP2A) catalytic subunits to form alpha-leucine ester residues. Involved in brassinosteroid (BR) signaling. Plays a negative role in BR signaling pathway. Functions as a positive regulator of BRI1 receptor-kinase degradation. Methylates PP2A, thus facilitating its association with activated BRI1. This leads to receptor dephosphorylation and degradation, and thus to the termination of BR signaling. May act upstream of ASK7/BIN2. Involved in methylation of PP2A during environmental stress responses. This chain is Leucine carboxyl methyltransferase 1 homolog, found in Arabidopsis thaliana (Mouse-ear cress).